We begin with the raw amino-acid sequence, 157 residues long: Cell cycle control protein 50C (157 aa).

Residues 1–34 (MEERAQHCLSRLLDNSALKQQELPIHRLYFTARR) are Cytoplasmic-facing. The helical transmembrane segment at 35 to 55 (VLFVFFATGIFCLCMGIILIL) threads the bilayer. Residues 56 to 157 (SARSTQEIEI…LFLNQVDFSV (102 aa)) lie on the Extracellular side of the membrane. An N-linked (GlcNAc...) asparagine glycan is attached at Asn-66.

It belongs to the CDC50/LEM3 family.

The protein resides in the membrane. This Pan troglodytes (Chimpanzee) protein is Cell cycle control protein 50C (TMEM30C).